The primary structure comprises 466 residues: Acetyl-coenzyme A carboxylase carboxyl transferase subunit beta, chloroplastic (466 aa).

The 269-residue stretch at 198 to 466 (LWIQCENCYE…FPLNQNSIGQ (269 aa)) folds into the CoA carboxyltransferase N-terminal domain. 4 residues coordinate Zn(2+): Cys-202, Cys-205, Cys-221, and Cys-224. The segment at 202–224 (CENCYELNYKKLLKSKMRICDEC) adopts a C4-type zinc-finger fold.

The protein belongs to the AccD/PCCB family. As to quaternary structure, acetyl-CoA carboxylase is a heterohexamer composed of biotin carboxyl carrier protein, biotin carboxylase and 2 subunits each of ACCase subunit alpha and ACCase plastid-coded subunit beta (accD). It depends on Zn(2+) as a cofactor.

It localises to the plastid. Its subcellular location is the chloroplast stroma. The catalysed reaction is N(6)-carboxybiotinyl-L-lysyl-[protein] + acetyl-CoA = N(6)-biotinyl-L-lysyl-[protein] + malonyl-CoA. Its pathway is lipid metabolism; malonyl-CoA biosynthesis; malonyl-CoA from acetyl-CoA: step 1/1. Component of the acetyl coenzyme A carboxylase (ACC) complex. Biotin carboxylase (BC) catalyzes the carboxylation of biotin on its carrier protein (BCCP) and then the CO(2) group is transferred by the transcarboxylase to acetyl-CoA to form malonyl-CoA. The protein is Acetyl-coenzyme A carboxylase carboxyl transferase subunit beta, chloroplastic of Fagopyrum esculentum subsp. ancestrale (Wild buckwheat).